The primary structure comprises 186 residues: ATP synthase subunit delta, chloroplastic (186 aa).

The protein belongs to the ATPase delta chain family. In terms of assembly, F-type ATPases have 2 components, F(1) - the catalytic core - and F(0) - the membrane proton channel. F(1) has five subunits: alpha(3), beta(3), gamma(1), delta(1), epsilon(1). CF(0) has four main subunits: a(1), b(1), b'(1) and c(10-14). The alpha and beta chains form an alternating ring which encloses part of the gamma chain. F(1) is attached to F(0) by a central stalk formed by the gamma and epsilon chains, while a peripheral stalk is formed by the delta, b and b' chains.

It localises to the plastid. The protein resides in the chloroplast thylakoid membrane. Its function is as follows. F(1)F(0) ATP synthase produces ATP from ADP in the presence of a proton or sodium gradient. F-type ATPases consist of two structural domains, F(1) containing the extramembraneous catalytic core and F(0) containing the membrane proton channel, linked together by a central stalk and a peripheral stalk. During catalysis, ATP synthesis in the catalytic domain of F(1) is coupled via a rotary mechanism of the central stalk subunits to proton translocation. This protein is part of the stalk that links CF(0) to CF(1). It either transmits conformational changes from CF(0) to CF(1) or is implicated in proton conduction. The protein is ATP synthase subunit delta, chloroplastic of Porphyra purpurea (Red seaweed).